The chain runs to 630 residues: Replication protein A 70 kDa DNA-binding subunit B (630 aa).

Residues 200 to 282 constitute a DNA-binding region (OB); that stretch reads IIKVRVTSKG…KTVHNDYEMT (83 aa). The segment at 496 to 516 adopts a C4-type zinc-finger fold; it reads CKTCNKKVTEAIGSGYWCEGC.

The protein belongs to the replication factor A protein 1 family. In terms of assembly, heterotrimer of RPA1, RPA2 and RPA3 (canonical replication protein A complex). Interacts with RPA2A. In terms of tissue distribution, expressed in root tips, roots, shoot apical meristem (SAM) and young leaves, and at lower levels in mature leaves, flag leaves and ears.

The protein resides in the nucleus. Component of the replication protein A complex (RPA) required for DNA recombination, repair and replication. The activity of RPA is mediated by single-stranded DNA binding and protein interactions. Probably involved in repair of double-strand DNA breaks (DSBs) induced by genotoxic stresses. The protein is Replication protein A 70 kDa DNA-binding subunit B (RPA1B) of Oryza sativa subsp. japonica (Rice).